The primary structure comprises 323 residues: Ribosomal RNA small subunit methyltransferase H (323 aa).

S-adenosyl-L-methionine is bound by residues 39–41 (GGY), aspartate 57, phenylalanine 84, aspartate 103, and glutamine 110.

The protein belongs to the methyltransferase superfamily. RsmH family.

The protein localises to the cytoplasm. It carries out the reaction cytidine(1402) in 16S rRNA + S-adenosyl-L-methionine = N(4)-methylcytidine(1402) in 16S rRNA + S-adenosyl-L-homocysteine + H(+). Specifically methylates the N4 position of cytidine in position 1402 (C1402) of 16S rRNA. This chain is Ribosomal RNA small subunit methyltransferase H, found in Gluconobacter oxydans (strain 621H) (Gluconobacter suboxydans).